Consider the following 113-residue polypeptide: Large ribosomal subunit protein uL22 (113 aa).

Belongs to the universal ribosomal protein uL22 family. Part of the 50S ribosomal subunit.

Its function is as follows. This protein binds specifically to 23S rRNA; its binding is stimulated by other ribosomal proteins, e.g. L4, L17, and L20. It is important during the early stages of 50S assembly. It makes multiple contacts with different domains of the 23S rRNA in the assembled 50S subunit and ribosome. Functionally, the globular domain of the protein is located near the polypeptide exit tunnel on the outside of the subunit, while an extended beta-hairpin is found that lines the wall of the exit tunnel in the center of the 70S ribosome. The chain is Large ribosomal subunit protein uL22 from Desulforamulus reducens (strain ATCC BAA-1160 / DSM 100696 / MI-1) (Desulfotomaculum reducens).